Consider the following 129-residue polypeptide: uncharacterized protein (129 aa).

This is an uncharacterized protein from Archaeoglobus fulgidus (strain ATCC 49558 / DSM 4304 / JCM 9628 / NBRC 100126 / VC-16).